The following is a 363-amino-acid chain: Probable L-tyrosine/L-aspartate decarboxylase (363 aa).

Lys208 is subject to N6-(pyridoxal phosphate)lysine.

It belongs to the group II decarboxylase family. MfnA subfamily. The cofactor is pyridoxal 5'-phosphate.

It carries out the reaction L-tyrosine + H(+) = tyramine + CO2. The enzyme catalyses L-aspartate + H(+) = beta-alanine + CO2. It functions in the pathway cofactor biosynthesis; methanofuran biosynthesis. The protein operates within cofactor biosynthesis; coenzyme A biosynthesis. Its function is as follows. Catalyzes the decarboxylation of L-tyrosine to produce tyramine for methanofuran biosynthesis. Can also catalyze the decarboxylation of L-aspartate to produce beta-alanine for coenzyme A (CoA) biosynthesis. This Methanothermobacter thermautotrophicus (strain ATCC 29096 / DSM 1053 / JCM 10044 / NBRC 100330 / Delta H) (Methanobacterium thermoautotrophicum) protein is Probable L-tyrosine/L-aspartate decarboxylase.